The primary structure comprises 700 residues: Polycomb protein suz12 (700 aa).

Disordered stretches follow at residues 215 to 250 (DFNGLTNGETNENIDVSEEPPARRKRNSSNRDEGDK) and 319 to 376 (TNDT…RDVS). The segment covering 218–228 (GLTNGETNENI) has biased composition (polar residues). Residues 405–428 (LHCPWCTLNCRKLYSLLKHLKLCH) form a C2H2-type zinc finger. The VEFS-box stretch occupies residues 520 to 596 (RLYFHSDTCL…NQMNHGCMLF (77 aa)). The interval 651-700 (LAPPSDEAFEEPNRTTSSSSSFMETNGKDRVVENDCVSGQPPKHSKKQKP) is disordered. Residues 664–674 (RTTSSSSSFME) are compositionally biased toward polar residues.

This sequence belongs to the VEFS (VRN2-EMF2-FIS2-SU(Z)12) family. As to quaternary structure, component of the prc2/eed-ezh2 complex.

Its subcellular location is the nucleus. In terms of biological role, polycomb group (PcG) protein. Component of the prc2/eed-ezh2 complex, which methylates 'Lys-9' (H3K9me) and 'Lys-27' (H3K27me) of histone H3, leading to transcriptional repression of the affected target gene. This chain is Polycomb protein suz12 (suz12), found in Xenopus tropicalis (Western clawed frog).